We begin with the raw amino-acid sequence, 407 residues long: Zinc finger protein 260 (407 aa).

Disordered regions lie at residues 1–21 (MLES…PGES), 39–72 (VEHK…HLRS), and 96–124 (SHQK…RNQR). The C2H2-type 1 zinc finger occupies 23–45 (YECNECKETFSLEQNFVEHKKTH). Composition is skewed to basic and acidic residues over residues 39-51 (VEHK…EKSP) and 100-111 (QHTEERPSESKK). The segment at 51-73 (PECTGCGEESSQASSLTLHLRSR) adopts a C2H2-type 2; degenerate zinc-finger fold. The C2H2-type 3 zinc finger occupies 79-101 (YKCGECGKAFSQRGNFLSHQKQH). Positions 115–124 (PMTTTVRNQR) are enriched in polar residues. 10 C2H2-type zinc fingers span residues 131 to 153 (YACK…EKIH), 159 to 181 (FECS…QNIH), 187 to 209 (FKCN…QRIH), 215 to 237 (YECK…QRSH), 243 to 265 (YTCK…EKIH), 271 to 293 (YKCN…HNIH), 299 to 321 (YECN…VRIH), 327 to 349 (YECK…MRSH), 355 to 377 (YGCN…MRIH), and 383 to 405 (YQCS…QRIH).

Belongs to the krueppel C2H2-type zinc-finger protein family. As to quaternary structure, binds DNA. Interacts with GATA4. Predominantly present in heart. Outside the heart, it is detected in embryonic and postnatal vascular smooth muscle cells and in epithelial cells of the lung, gut and kidney at sites of epithelial morphogenesis and in the spinal cord (at protein level).

It is found in the nucleus. Transcription factor that acts as a cardiac regulator and an effector of alpha1-adrenergic signaling. Binds to PE response elements (PERE) present in the promoter of genes such as ANF/NPPA and acts as a direct transcriptional activator of NPPA. Also acts as a cofactor with GATA4, a key cardiac regulator. The protein is Zinc finger protein 260 (Znf260) of Mus musculus (Mouse).